A 390-amino-acid polypeptide reads, in one-letter code: Phosphoglycerate kinase (390 aa).

Substrate-binding positions include 21–23 (DLN), R36, 59–62 (HLGR), R114, and R147. ATP is bound by residues K198, E314, and 340 to 343 (GGDT).

This sequence belongs to the phosphoglycerate kinase family. In terms of assembly, monomer.

The protein resides in the cytoplasm. The enzyme catalyses (2R)-3-phosphoglycerate + ATP = (2R)-3-phospho-glyceroyl phosphate + ADP. The protein operates within carbohydrate degradation; glycolysis; pyruvate from D-glyceraldehyde 3-phosphate: step 2/5. The chain is Phosphoglycerate kinase from Buchnera aphidicola subsp. Acyrthosiphon pisum (strain 5A).